We begin with the raw amino-acid sequence, 519 residues long: 2-isopropylmalate synthase (519 aa).

Residues 12 to 274 (VVIFDTTLRD…WCNVESTTLT (263 aa)) enclose the Pyruvate carboxyltransferase domain. Mn(2+) contacts are provided by Asp21, His209, His211, and Asn245. Residues 398–519 (RLVSLTVIAG…QREAPVAAAS (122 aa)) are regulatory domain.

This sequence belongs to the alpha-IPM synthase/homocitrate synthase family. LeuA type 1 subfamily. In terms of assembly, homodimer. Requires Mn(2+) as cofactor.

It is found in the cytoplasm. It catalyses the reaction 3-methyl-2-oxobutanoate + acetyl-CoA + H2O = (2S)-2-isopropylmalate + CoA + H(+). It participates in amino-acid biosynthesis; L-leucine biosynthesis; L-leucine from 3-methyl-2-oxobutanoate: step 1/4. In terms of biological role, catalyzes the condensation of the acetyl group of acetyl-CoA with 3-methyl-2-oxobutanoate (2-ketoisovalerate) to form 3-carboxy-3-hydroxy-4-methylpentanoate (2-isopropylmalate). This chain is 2-isopropylmalate synthase, found in Afipia carboxidovorans (strain ATCC 49405 / DSM 1227 / KCTC 32145 / OM5) (Oligotropha carboxidovorans).